The primary structure comprises 1144 residues: Ribonucleoside-diphosphate reductase large subunit (1144 aa).

The segment at 1–33 is disordered; sequence MANRPAASALAGARSPSERQEPREPEVAPPGGD. Residues 16-26 are compositionally biased toward basic and acidic residues; that stretch reads PSERQEPREPE. The RIP homotypic interaction motif (RHIM) motif lies at 55–75; that stretch reads AYRISDSSFVQCGSNCSMIID. A disordered region spans residues 118–324; the sequence is SGPSATTSVG…TDPGYPVPLE (207 aa). A compositionally biased stretch (polar residues) spans 119–132; the sequence is GPSATTSVGTQTSG. Positions 141-159 are enriched in pro residues; that stretch reads TPEPQGPQAVPPPPPPPFP. Residues 164 to 179 are compositionally biased toward basic and acidic residues; that stretch reads CCARRDARGGAEKDVG. Residues 192 to 204 are compositionally biased toward acidic residues; sequence SETEDSDSSDEDT. Composition is skewed to low complexity over residues 205–216 and 279–305; these read GSGSETLSRSSS and GSAT…DVAP. Substrate-binding positions include T573, 588–589, G619, 798–802, and 975–979; these read SC, NLCTE, and PTAAS. A disulfide bridge connects residues C589 and C815. N798 (proton acceptor) is an active-site residue. Catalysis depends on C800, which acts as the Cysteine radical intermediate. E802 functions as the Proton acceptor in the catalytic mechanism.

Belongs to the ribonucleoside diphosphate reductase large chain family. In terms of assembly, heterotetramer composed of a homodimer of the large subunit (R1) and a homodimer of the small subunit (R2). Larger multisubunit protein complex are also active, composed of (R1)n(R2)n. May self-assemble (via RIP homotypic interaction motif/RHIM) into homomeric fibrillar amyloid structures. Interacts (via RHIM) with human RIPK1 (via RHIM). Interacts (via RHIM) with human RIPK3 (via RHIM). May interact (via RHIM) with human ZBP1 (via RHIM). Interacts (via C-terminus) with host CASP8.

It carries out the reaction a 2'-deoxyribonucleoside 5'-diphosphate + [thioredoxin]-disulfide + H2O = a ribonucleoside 5'-diphosphate + [thioredoxin]-dithiol. Its function is as follows. Ribonucleoside-diphosphate reductase holoenzyme that provides the precursors necessary for viral DNA synthesis. Allows virus growth in non-dividing cells, as well as reactivation from latency in infected hosts. Catalyzes the biosynthesis of deoxyribonucleotides from the corresponding ribonucleotides. The N-terminal region confers antiapoptotic activity in differentiated cells such as neurons and is important for viral reactivation to increase neural survivability. Prevents host necroptosis by targeting host RIPK1 and RIPK3, thereby hampering the formation of necroptotic RIPK1-RIPK3 complexes. May form hetero-amyloid structures with host proteins RIPK3 or ZBP1, thereby preventing RIPK3- and ZBP1-mediated necroptosis. In addition, inhibits extrinsic apoptosis by targeting host CASP8. The protein is Ribonucleoside-diphosphate reductase large subunit of Homo sapiens (Human).